Here is a 294-residue protein sequence, read N- to C-terminus: Lipoyl synthase (294 aa).

[4Fe-4S] cluster contacts are provided by C35, C40, C46, C61, C65, C68, and S275. The Radical SAM core domain maps to 46-264 (CWGGGTATVM…RDQGLALGFR (219 aa)).

The protein belongs to the radical SAM superfamily. Lipoyl synthase family. It depends on [4Fe-4S] cluster as a cofactor.

Its subcellular location is the cytoplasm. The enzyme catalyses [[Fe-S] cluster scaffold protein carrying a second [4Fe-4S](2+) cluster] + N(6)-octanoyl-L-lysyl-[protein] + 2 oxidized [2Fe-2S]-[ferredoxin] + 2 S-adenosyl-L-methionine + 4 H(+) = [[Fe-S] cluster scaffold protein] + N(6)-[(R)-dihydrolipoyl]-L-lysyl-[protein] + 4 Fe(3+) + 2 hydrogen sulfide + 2 5'-deoxyadenosine + 2 L-methionine + 2 reduced [2Fe-2S]-[ferredoxin]. The protein operates within protein modification; protein lipoylation via endogenous pathway; protein N(6)-(lipoyl)lysine from octanoyl-[acyl-carrier-protein]: step 2/2. Functionally, catalyzes the radical-mediated insertion of two sulfur atoms into the C-6 and C-8 positions of the octanoyl moiety bound to the lipoyl domains of lipoate-dependent enzymes, thereby converting the octanoylated domains into lipoylated derivatives. This chain is Lipoyl synthase, found in Anaeromyxobacter dehalogenans (strain 2CP-C).